The following is a 231-amino-acid chain: NADH-ubiquinone oxidoreductase chain 4 (231 aa).

A run of 6 helical transmembrane segments spans residues 1–21, 34–54, 61–80, 84–106, 128–148, and 169–189; these read PIAGSMVLAAILLKLGGYGII, MFLPFIVLALWGAILANLTCL, SLIAYSSISHMGLVVAAIII, WGLTGAMTLMIAHGFTSSALFCL, ILPMTTTWWLLANLMNIATPP, and TIILLGLSMLITASYSLHMFL.

This sequence belongs to the complex I subunit 4 family.

The protein resides in the mitochondrion membrane. The enzyme catalyses a ubiquinone + NADH + 5 H(+)(in) = a ubiquinol + NAD(+) + 4 H(+)(out). Core subunit of the mitochondrial membrane respiratory chain NADH dehydrogenase (Complex I) that is believed to belong to the minimal assembly required for catalysis. Complex I functions in the transfer of electrons from NADH to the respiratory chain. The immediate electron acceptor for the enzyme is believed to be ubiquinone. This chain is NADH-ubiquinone oxidoreductase chain 4 (MT-ND4), found in Atropoides picadoi (Picado's pit viper).